A 413-amino-acid chain; its full sequence is uncharacterized protein (413 aa).

This is an uncharacterized protein from Mycobacterium tuberculosis (strain CDC 1551 / Oshkosh).